The primary structure comprises 227 residues: Octanoyltransferase (227 aa).

The 188-residue stretch at 35–222 (EAYENRIIMC…ELGRLLNEKK (188 aa)) folds into the BPL/LPL catalytic domain. Substrate-binding positions include 80 to 87 (RGGDITYH), 152 to 154 (AIG), and 165 to 167 (GLA). Cysteine 183 serves as the catalytic Acyl-thioester intermediate.

Belongs to the LipB family.

The protein localises to the cytoplasm. The enzyme catalyses octanoyl-[ACP] + L-lysyl-[protein] = N(6)-octanoyl-L-lysyl-[protein] + holo-[ACP] + H(+). It participates in protein modification; protein lipoylation via endogenous pathway; protein N(6)-(lipoyl)lysine from octanoyl-[acyl-carrier-protein]: step 1/2. Its function is as follows. Catalyzes the transfer of endogenously produced octanoic acid from octanoyl-acyl-carrier-protein onto the lipoyl domains of lipoate-dependent enzymes. Lipoyl-ACP can also act as a substrate although octanoyl-ACP is likely to be the physiological substrate. The protein is Octanoyltransferase of Bacteroides thetaiotaomicron (strain ATCC 29148 / DSM 2079 / JCM 5827 / CCUG 10774 / NCTC 10582 / VPI-5482 / E50).